Reading from the N-terminus, the 332-residue chain is Tryptophan--tRNA ligase (332 aa).

ATP is bound by residues 13 to 15 (KPS) and 21 to 22 (GN). The 'HIGH' region motif lies at 14–22 (PSGDLTLGN). An L-tryptophan-binding site is contributed by Asp-137. ATP-binding positions include 149–151 (GKD), Ile-188, and 197–201 (KMSKS). Positions 197-201 (KMSKS) match the 'KMSKS' region motif.

This sequence belongs to the class-I aminoacyl-tRNA synthetase family. As to quaternary structure, homodimer.

It localises to the cytoplasm. It carries out the reaction tRNA(Trp) + L-tryptophan + ATP = L-tryptophyl-tRNA(Trp) + AMP + diphosphate + H(+). Its function is as follows. Catalyzes the attachment of tryptophan to tRNA(Trp). In Clostridium perfringens (strain 13 / Type A), this protein is Tryptophan--tRNA ligase.